Reading from the N-terminus, the 37-residue chain is Esculentin-2HSa (37 aa).

A disulfide bridge connects residues Cys-31 and Cys-37.

In terms of tissue distribution, expressed by the skin glands.

The protein localises to the secreted. Its function is as follows. Has antibacterial activity against the Gram-positive bacterium S.aureus ATCC 25923 (MIC=32 uM) and the Gram-negative bacterium E.coli ATCC 25726 (MIC=16 uM). The protein is Esculentin-2HSa of Odorrana hosii (Hose's rock frog).